Reading from the N-terminus, the 399-residue chain is S-adenosylmethionine synthase (399 aa).

H17 serves as a coordination point for ATP. D19 is a binding site for Mg(2+). K(+) is bound at residue E45. L-methionine is bound by residues E58 and Q101. A flexible loop region spans residues 101-111; sequence QSPDIAQGVDK. ATP-binding positions include 176–178, 243–244, D252, 258–259, and K279; these read DGK, RF, and RK. Position 252 (D252) interacts with L-methionine. K283 provides a ligand contact to L-methionine.

Belongs to the AdoMet synthase family. Homotetramer; dimer of dimers. Mg(2+) serves as cofactor. Requires K(+) as cofactor.

It localises to the cytoplasm. It catalyses the reaction L-methionine + ATP + H2O = S-adenosyl-L-methionine + phosphate + diphosphate. It participates in amino-acid biosynthesis; S-adenosyl-L-methionine biosynthesis; S-adenosyl-L-methionine from L-methionine: step 1/1. In terms of biological role, catalyzes the formation of S-adenosylmethionine (AdoMet) from methionine and ATP. The overall synthetic reaction is composed of two sequential steps, AdoMet formation and the subsequent tripolyphosphate hydrolysis which occurs prior to release of AdoMet from the enzyme. This Staphylococcus epidermidis (strain ATCC 35984 / DSM 28319 / BCRC 17069 / CCUG 31568 / BM 3577 / RP62A) protein is S-adenosylmethionine synthase.